We begin with the raw amino-acid sequence, 146 residues long: MADPEKILKVSVVTPDGIVYSHNATMVAMRAIDGERTIMYDHLPIVTPLAIGEVRVKRTHEMNDRVDHIAVNGGYIEFSNNEATIIADSAERARNIDVERAQSAKKRAEQHMQEAKEKHNEREMLEAEIALRRAVNRLHVRENYGK.

The disordered stretch occupies residues 102–122; that stretch reads QSAKKRAEQHMQEAKEKHNER.

This sequence belongs to the ATPase epsilon chain family. F-type ATPases have 2 components, CF(1) - the catalytic core - and CF(0) - the membrane proton channel. CF(1) has five subunits: alpha(3), beta(3), gamma(1), delta(1), epsilon(1). CF(0) has three main subunits: a, b and c.

Its subcellular location is the cell membrane. Functionally, produces ATP from ADP in the presence of a proton gradient across the membrane. This is ATP synthase epsilon chain from Lactobacillus gasseri (strain ATCC 33323 / DSM 20243 / BCRC 14619 / CIP 102991 / JCM 1131 / KCTC 3163 / NCIMB 11718 / NCTC 13722 / AM63).